A 249-amino-acid polypeptide reads, in one-letter code: NADH-quinone oxidoreductase subunit C (249 aa).

The protein belongs to the complex I 30 kDa subunit family. In terms of assembly, NDH-1 is composed of 14 different subunits. Subunits NuoB, C, D, E, F, and G constitute the peripheral sector of the complex.

The protein resides in the cell inner membrane. The enzyme catalyses a quinone + NADH + 5 H(+)(in) = a quinol + NAD(+) + 4 H(+)(out). NDH-1 shuttles electrons from NADH, via FMN and iron-sulfur (Fe-S) centers, to quinones in the respiratory chain. The immediate electron acceptor for the enzyme in this species is believed to be ubiquinone. Couples the redox reaction to proton translocation (for every two electrons transferred, four hydrogen ions are translocated across the cytoplasmic membrane), and thus conserves the redox energy in a proton gradient. This Stenotrophomonas maltophilia (strain R551-3) protein is NADH-quinone oxidoreductase subunit C.